Consider the following 254-residue polypeptide: U3 small nucleolar RNA-associated protein NOL7 (254 aa).

Residues 1–90 are disordered; the sequence is MVQLRPRLSR…ASARRDKTLL (90 aa). Composition is skewed to acidic residues over residues 18-31 and 48-61; these read MVDE…EEEA and PLDE…EAPE. Over residues 71–90 the composition is skewed to basic and acidic residues; it reads EAREEELRVRASARRDKTLL. Residue lysine 127 forms a Glycyl lysine isopeptide (Lys-Gly) (interchain with G-Cter in SUMO2) linkage. A Phosphoserine modification is found at serine 129. Residue lysine 157 forms a Glycyl lysine isopeptide (Lys-Gly) (interchain with G-Cter in SUMO2) linkage. The interval 235–254 is disordered; that stretch reads NAKRFKKRWMAKKMKKKTYK.

Belongs to the UTP16 family. In terms of assembly, part of the small subunit (SSU) processome, composed of more than 70 proteins and the RNA chaperone small nucleolar RNA (snoRNA) U3.

It localises to the nucleus. Its subcellular location is the nucleolus. Its function is as follows. Functions as part of the small subunit (SSU) processome, first precursor of the small eukaryotic ribosomal subunit that coordinates the first two steps of ribosome biogenesis in transcription of the primary transcript pre-RNA and pre-18S processing. During the assembly of the SSU processome in the nucleolus, many ribosome biogenesis factors, an RNA chaperone and ribosomal proteins associate with the nascent pre-rRNA and work in concert to generate RNA folding, modifications, rearrangements and cleavage as well as targeted degradation of pre-ribosomal RNA by the RNA exosome. This subunit is required for processing of the 5'-external transcribed spacer sequence (5'ETS) of the primary transcript pre-rRNA to yield the 18S rRNA. Also plays a role in maintaining early pre-rRNA levels, either by assisting in its transcription or stability. The polypeptide is U3 small nucleolar RNA-associated protein NOL7 (Nol7) (Mus musculus (Mouse)).